A 366-amino-acid polypeptide reads, in one-letter code: MLERRYLVLEDGTYYEGYKLGSNDLSVGEIVFNTAMTGYQETISDPSYTGQIITFTYPLIGNYGINRDDFEALTPTLNGVVVKEASTHPSNFRNQKTLHDVLVQYKIPGISGVDTRSITRKIRQHGVLKAGFTDNRDDIDSLINTLKSTELPRDEVETVSTKTPYVSTGSDLSVVLLDFGKKQNIVRELNMRGCNVTVVPYNTTAEEILAMSPDGVMLSNGPGDPDVVEVAIEMIKGILGKIPFFGICLGHQLFALSQGGTSFKMKFGHRGANHPVKDLRSGKVDITSQNHGYAIDKNSLVNTDLEVTHIALNDGTVEGLRHKTLPAFSVQYHPEARPGPSDSNYLFDEFMTMMKEFKEKEQTANA.

The segment at 1–171 (MLERRYLVLE…KTPYVSTGSD (171 aa)) is CPSase. Ser47, Gly221, and Gly223 together coordinate L-glutamine. In terms of domain architecture, Glutamine amidotransferase type-1 spans 173–360 (SVVLLDFGKK…MTMMKEFKEK (188 aa)). The Nucleophile role is filled by Cys248. 5 residues coordinate L-glutamine: Leu249, Gln252, Asn290, Gly292, and Tyr293. Residues His333 and Glu335 contribute to the active site.

This sequence belongs to the CarA family. In terms of assembly, composed of two chains; the small (or glutamine) chain promotes the hydrolysis of glutamine to ammonia, which is used by the large (or ammonia) chain to synthesize carbamoyl phosphate. Tetramer of heterodimers (alpha,beta)4.

The enzyme catalyses hydrogencarbonate + L-glutamine + 2 ATP + H2O = carbamoyl phosphate + L-glutamate + 2 ADP + phosphate + 2 H(+). It carries out the reaction L-glutamine + H2O = L-glutamate + NH4(+). It functions in the pathway amino-acid biosynthesis; L-arginine biosynthesis; carbamoyl phosphate from bicarbonate: step 1/1. The protein operates within pyrimidine metabolism; UMP biosynthesis via de novo pathway; (S)-dihydroorotate from bicarbonate: step 1/3. In terms of biological role, small subunit of the glutamine-dependent carbamoyl phosphate synthetase (CPSase). CPSase catalyzes the formation of carbamoyl phosphate from the ammonia moiety of glutamine, carbonate, and phosphate donated by ATP, constituting the first step of 2 biosynthetic pathways, one leading to arginine and/or urea and the other to pyrimidine nucleotides. The small subunit (glutamine amidotransferase) binds and cleaves glutamine to supply the large subunit with the substrate ammonia. The protein is Carbamoyl phosphate synthase small chain of Staphylococcus haemolyticus (strain JCSC1435).